The sequence spans 131 residues: Small ribosomal subunit protein uS8 (131 aa).

Belongs to the universal ribosomal protein uS8 family. Part of the 30S ribosomal subunit. Contacts proteins S5 and S12.

Functionally, one of the primary rRNA binding proteins, it binds directly to 16S rRNA central domain where it helps coordinate assembly of the platform of the 30S subunit. The chain is Small ribosomal subunit protein uS8 from Nautilia profundicola (strain ATCC BAA-1463 / DSM 18972 / AmH).